Consider the following 96-residue polypeptide: Co-chaperonin GroES (96 aa).

Belongs to the GroES chaperonin family. Heptamer of 7 subunits arranged in a ring. Interacts with the chaperonin GroEL.

The protein resides in the cytoplasm. Functionally, together with the chaperonin GroEL, plays an essential role in assisting protein folding. The GroEL-GroES system forms a nano-cage that allows encapsulation of the non-native substrate proteins and provides a physical environment optimized to promote and accelerate protein folding. GroES binds to the apical surface of the GroEL ring, thereby capping the opening of the GroEL channel. This Hyphomonas neptunium (strain ATCC 15444) protein is Co-chaperonin GroES.